We begin with the raw amino-acid sequence, 101 residues long: Small ribosomal subunit protein uS14 (101 aa).

It belongs to the universal ribosomal protein uS14 family. As to quaternary structure, part of the 30S ribosomal subunit. Contacts proteins S3 and S10.

Functionally, binds 16S rRNA, required for the assembly of 30S particles and may also be responsible for determining the conformation of the 16S rRNA at the A site. The chain is Small ribosomal subunit protein uS14 from Idiomarina loihiensis (strain ATCC BAA-735 / DSM 15497 / L2-TR).